We begin with the raw amino-acid sequence, 122 residues long: Large ribosomal subunit protein uL14 (122 aa).

The protein belongs to the universal ribosomal protein uL14 family. As to quaternary structure, part of the 50S ribosomal subunit. Forms a cluster with proteins L3 and L19. In the 70S ribosome, L14 and L19 interact and together make contacts with the 16S rRNA in bridges B5 and B8.

In terms of biological role, binds to 23S rRNA. Forms part of two intersubunit bridges in the 70S ribosome. In Chlamydia caviae (strain ATCC VR-813 / DSM 19441 / 03DC25 / GPIC) (Chlamydophila caviae), this protein is Large ribosomal subunit protein uL14.